Reading from the N-terminus, the 645-residue chain is tRNA 5-methylaminomethyl-2-thiouridine biosynthesis bifunctional protein MnmC (645 aa).

The tRNA (mnm(5)s(2)U34)-methyltransferase stretch occupies residues 1–230 (MPMSEPIDWL…KRHNLHAVFD (230 aa)). The interval 254-645 (LGAGIAGAAA…LASERLGRRR (392 aa)) is FAD-dependent cmnm(5)s(2)U34 oxidoreductase.

It in the N-terminal section; belongs to the methyltransferase superfamily. tRNA (mnm(5)s(2)U34)-methyltransferase family. The protein in the C-terminal section; belongs to the DAO family. It depends on FAD as a cofactor.

It localises to the cytoplasm. The enzyme catalyses 5-aminomethyl-2-thiouridine(34) in tRNA + S-adenosyl-L-methionine = 5-methylaminomethyl-2-thiouridine(34) in tRNA + S-adenosyl-L-homocysteine + H(+). In terms of biological role, catalyzes the last two steps in the biosynthesis of 5-methylaminomethyl-2-thiouridine (mnm(5)s(2)U) at the wobble position (U34) in tRNA. Catalyzes the FAD-dependent demodification of cmnm(5)s(2)U34 to nm(5)s(2)U34, followed by the transfer of a methyl group from S-adenosyl-L-methionine to nm(5)s(2)U34, to form mnm(5)s(2)U34. The sequence is that of tRNA 5-methylaminomethyl-2-thiouridine biosynthesis bifunctional protein MnmC from Delftia acidovorans (strain DSM 14801 / SPH-1).